A 411-amino-acid chain; its full sequence is [Pyruvate dehydrogenase (acetyl-transferring)] kinase isozyme 4, mitochondrial (411 aa).

In terms of domain architecture, Histidine kinase spans 138–368 (IIEYKDACTV…DAIIYLKALS (231 aa)). Residues 254 to 261 (ELFKNAMR), aspartate 293, 312 to 313 (ST), and 329 to 334 (GFGYGL) contribute to the ATP site.

It belongs to the PDK/BCKDK protein kinase family. As to quaternary structure, homodimer. Interacts with the pyruvate dehydrogenase complex subunit DLAT, and is part of the multimeric pyruvate dehydrogenase complex that contains multiple copies of pyruvate dehydrogenase (E1), dihydrolipoamide acetyltransferase (DLAT, E2) and lipoamide dehydrogenase (DLD, E3). As to expression, ubiquitous; highest levels of expression in heart and skeletal muscle.

Its subcellular location is the mitochondrion matrix. The catalysed reaction is L-seryl-[pyruvate dehydrogenase E1 alpha subunit] + ATP = O-phospho-L-seryl-[pyruvate dehydrogenase E1 alpha subunit] + ADP + H(+). Kinase that plays a key role in regulation of glucose and fatty acid metabolism and homeostasis via phosphorylation of the pyruvate dehydrogenase subunits PDHA1 and PDHA2. This inhibits pyruvate dehydrogenase activity, and thereby regulates metabolite flux through the tricarboxylic acid cycle, down-regulates aerobic respiration and inhibits the formation of acetyl-coenzyme A from pyruvate. Inhibition of pyruvate dehydrogenase decreases glucose utilization and increases fat metabolism in response to prolonged fasting and starvation. Plays an important role in maintaining normal blood glucose levels under starvation, and is involved in the insulin signaling cascade. Via its regulation of pyruvate dehydrogenase activity, plays an important role in maintaining normal blood pH and in preventing the accumulation of ketone bodies under starvation. In the fed state, mediates cellular responses to glucose levels and to a high-fat diet. Regulates both fatty acid oxidation and de novo fatty acid biosynthesis. Plays a role in the generation of reactive oxygen species. Protects detached epithelial cells against anoikis. Plays a role in cell proliferation via its role in regulating carbohydrate and fatty acid metabolism. The chain is [Pyruvate dehydrogenase (acetyl-transferring)] kinase isozyme 4, mitochondrial (PDK4) from Homo sapiens (Human).